Reading from the N-terminus, the 302-residue chain is Nucleotide-binding protein Bmul_0520/BMULJ_02739 (302 aa).

G8–S15 serves as a coordination point for ATP. D57 to S60 serves as a coordination point for GTP.

This sequence belongs to the RapZ-like family.

Its function is as follows. Displays ATPase and GTPase activities. This Burkholderia multivorans (strain ATCC 17616 / 249) protein is Nucleotide-binding protein Bmul_0520/BMULJ_02739.